The chain runs to 310 residues: Protein TIFY 6A (310 aa).

Residues 141–176 enclose the Tify domain; sequence SKPLPPQLTIFYAGSVLVYQDIAPEKAQAIMLLAGN. The Jas signature appears at 259-284; it reads PQTRKASLARFLEKRKERVINVSPYY. Residues 261 to 268 carry the Nuclear localization signal motif; sequence TRKASLAR.

Belongs to the TIFY/JAZ family. In terms of assembly, homo- and heterodimer. Interacts with MYC2, AFPH2/NINJA, TIFY10A/JAZ1, TIFY6B/JAZ3, TIFY5A/JAZ8, TIFY9/JAZ10 and TIFY3A/JAZ11. Interacts with RHD6 and RSL1. Post-translationally, ubiquitinated. Targeted for degradation by the SCF(COI1) E3 ubiquitin ligase-proteasome pathway during jasmonate signaling.

The protein localises to the nucleus. Repressor of jasmonate responses. Interacts with and suppresses RHD6 and RSL1 transcription factor activities to negatively regulate jasmonate-stimulated root hair development. The chain is Protein TIFY 6A (TIFY6A) from Arabidopsis thaliana (Mouse-ear cress).